Consider the following 430-residue polypeptide: tRNA(Ile)-lysidine synthase (430 aa).

Residue 21 to 26 (SGGLDS) coordinates ATP.

It belongs to the tRNA(Ile)-lysidine synthase family.

The protein resides in the cytoplasm. It carries out the reaction cytidine(34) in tRNA(Ile2) + L-lysine + ATP = lysidine(34) in tRNA(Ile2) + AMP + diphosphate + H(+). Ligates lysine onto the cytidine present at position 34 of the AUA codon-specific tRNA(Ile) that contains the anticodon CAU, in an ATP-dependent manner. Cytidine is converted to lysidine, thus changing the amino acid specificity of the tRNA from methionine to isoleucine. The protein is tRNA(Ile)-lysidine synthase of Salmonella heidelberg (strain SL476).